The following is a 403-amino-acid chain: TPR repeat-containing protein Synpcc7942_0270 (403 aa).

5 TPR repeats span residues 208–243 (AYLCSKLGGLLVQEGDLKAAQRWLKQGLKQGRPEPA), 244–282 (VRYELLYHLALLERRQGDLDAAIDRYQAALQEPVDAIHK), 283–316 (LGAWVNLSHLYRDRGQLGLAYDAARQAVAAAPQA), 317–350 (TVALTALGLAARAIGNYPEAIAAYQQALQLDPND), and 351–387 (PSLYQNLGAVLFQVGQLEASYAAFRQAIAGYEQQGSP).

In Synechococcus elongatus (strain ATCC 33912 / PCC 7942 / FACHB-805) (Anacystis nidulans R2), this protein is TPR repeat-containing protein Synpcc7942_0270.